Reading from the N-terminus, the 89-residue chain is Small ribosomal subunit protein uS15 (89 aa).

The protein belongs to the universal ribosomal protein uS15 family. In terms of assembly, part of the 30S ribosomal subunit. Forms a bridge to the 50S subunit in the 70S ribosome, contacting the 23S rRNA.

Functionally, one of the primary rRNA binding proteins, it binds directly to 16S rRNA where it helps nucleate assembly of the platform of the 30S subunit by binding and bridging several RNA helices of the 16S rRNA. Its function is as follows. Forms an intersubunit bridge (bridge B4) with the 23S rRNA of the 50S subunit in the ribosome. In Polynucleobacter necessarius subsp. necessarius (strain STIR1), this protein is Small ribosomal subunit protein uS15.